We begin with the raw amino-acid sequence, 686 residues long: Proprotein convertase subtilisin/kexin type 9 (686 aa).

The first 28 residues, Met-1–Ala-28, serve as a signal peptide directing secretion. Positions Gln-29–Gln-150 are excised as a propeptide. Position 36 is a sulfotyrosine (Tyr-36). At Ser-45 the chain carries Phosphoserine. The 73-residue stretch at Thr-75–Val-147 folds into the Inhibitor I9 domain. A Peptidase S8 domain is found at Pro-153–Trp-459. Residues Asp-184 and His-224 each act as charge relay system in the active site. Intrachain disulfides connect Cys-221–Cys-253 and Cys-321–Cys-356. Ser-384 functions as the Charge relay system in the catalytic mechanism. The segment at Gly-448–Ser-686 is C-terminal domain. Disulfide bonds link Cys-455–Cys-525, Cys-475–Cys-524, and Cys-484–Cys-507. N-linked (GlcNAc...) asparagine glycosylation is present at Asn-531. 6 cysteine pairs are disulfide-bonded: Cys-532–Cys-599, Cys-550–Cys-598, Cys-560–Cys-586, Cys-606–Cys-677, Cys-624–Cys-676, and Cys-633–Cys-652. Ser-686 bears the Phosphoserine mark.

Belongs to the peptidase S8 family. As to quaternary structure, monomer. Can self-associate to form dimers and higher multimers which may have increased LDLR degrading activity. The precursor protein but not the mature protein may form multimers. Interacts with APOB, VLDLR, LRP8/APOER2 and BACE1. The full-length immature form (pro-PCSK9) interacts with SCNN1A, SCNN1B and SCNN1G. The pro-PCSK9 form (via C-terminal domain) interacts with LDLR. Interacts (via the C-terminal domain) with ANXA2 (via repeat Annexin 1); the interaction inhibits the degradation of LDLR. The cofactor is Ca(2+). In terms of processing, cleavage by furin and PCSK5 generates a truncated inactive protein that is unable to induce LDLR degradation. Post-translationally, undergoes autocatalytic cleavage in the endoplasmic reticulum to release the propeptide from the N-terminus and the cleavage of the propeptide is strictly required for its maturation and activation. The cleaved propeptide however remains associated with the catalytic domain through non-covalent interactions, preventing potential substrates from accessing its active site. As a result, it is secreted from cells as a propeptide-containing, enzymatically inactive protein. Phosphorylation protects the propeptide against proteolysis.

The protein resides in the cytoplasm. Its subcellular location is the secreted. It is found in the endosome. It localises to the lysosome. The protein localises to the cell surface. The protein resides in the endoplasmic reticulum. Its subcellular location is the golgi apparatus. Its activity is regulated as follows. Its proteolytic activity is autoinhibited by the non-covalent binding of the propeptide to the catalytic domain. Inhibited by EGTA. In terms of biological role, crucial player in the regulation of plasma cholesterol homeostasis. Binds to low-density lipid receptor family members: low density lipoprotein receptor (LDLR), very low density lipoprotein receptor (VLDLR), apolipoprotein E receptor (LRP1/APOER) and apolipoprotein receptor 2 (LRP8/APOER2), and promotes their degradation in intracellular acidic compartments. Acts via a non-proteolytic mechanism to enhance the degradation of the hepatic LDLR through a clathrin LDLRAP1/ARH-mediated pathway. May prevent the recycling of LDLR from endosomes to the cell surface or direct it to lysosomes for degradation. Can induce ubiquitination of LDLR leading to its subsequent degradation. Inhibits intracellular degradation of APOB via the autophagosome/lysosome pathway in a LDLR-independent manner. Involved in the disposal of non-acetylated intermediates of BACE1 in the early secretory pathway. Inhibits epithelial Na(+) channel (ENaC)-mediated Na(+) absorption by reducing ENaC surface expression primarily by increasing its proteasomal degradation. Regulates neuronal apoptosis via modulation of LRP8/APOER2 levels and related anti-apoptotic signaling pathways. This is Proprotein convertase subtilisin/kexin type 9 (PCSK9) from Saguinus labiatus (Red-chested mustached tamarin).